The chain runs to 184 residues: UPF0397 protein SAS2570 (184 aa).

5 helical membrane-spanning segments follow: residues 11 to 31 (VVAI…VVIP), 44 to 64 (AFLA…TGLV), 77 to 97 (AWWS…WIGL), 111 to 131 (MIYF…LIAP), and 148 to 168 (QGVI…TILL).

It belongs to the UPF0397 family.

The protein localises to the cell membrane. This chain is UPF0397 protein SAS2570, found in Staphylococcus aureus (strain MSSA476).